A 436-amino-acid polypeptide reads, in one-letter code: Trigger factor (436 aa).

Positions 163–248 (DDRIVLDFAG…VKEVAEAVLP (86 aa)) constitute a PPIase FKBP-type domain.

Belongs to the FKBP-type PPIase family. Tig subfamily.

The protein resides in the cytoplasm. The catalysed reaction is [protein]-peptidylproline (omega=180) = [protein]-peptidylproline (omega=0). In terms of biological role, involved in protein export. Acts as a chaperone by maintaining the newly synthesized protein in an open conformation. Functions as a peptidyl-prolyl cis-trans isomerase. This Bordetella avium (strain 197N) protein is Trigger factor.